The primary structure comprises 422 residues: Replication factor C large subunit (422 aa).

G63–T70 lines the ATP pocket.

Belongs to the activator 1 small subunits family. RfcL subfamily. Heteromultimer composed of small subunits (RfcS) and large subunits (RfcL).

Functionally, part of the RFC clamp loader complex which loads the PCNA sliding clamp onto DNA. The chain is Replication factor C large subunit from Pyrobaculum aerophilum (strain ATCC 51768 / DSM 7523 / JCM 9630 / CIP 104966 / NBRC 100827 / IM2).